A 470-amino-acid chain; its full sequence is Cell division protein FtsP (470 aa).

A signal peptide (tat-type signal) is located at residues 1 to 27 (MSLSRRQFIQASGIALCAGAVPLKASA). A Plastocyanin-like domain is found at 68–164 (WGINGRYLGP…NGLAGMWLVE (97 aa)).

The protein belongs to the FtsP family. Exported by the Tat system. The position of the signal peptide cleavage has been experimentally proven. Can also be exported by the Sec system.

It localises to the periplasm. Its function is as follows. Cell division protein that is required for growth during stress conditions. May be involved in protecting or stabilizing the divisomal assembly under conditions of stress. In Escherichia coli (strain K12), this protein is Cell division protein FtsP.